The following is a 91-amino-acid chain: MAHKKSGGSSRNGRDSAGRRLGVKKFGGEAINAGGIIVRQRGTKFWPGENVGMGKDHTLFALATGAVKFVTKRDNRTYATVVPANEVMAAE.

Residues 1–21 (MAHKKSGGSSRNGRDSAGRRL) are disordered.

The protein belongs to the bacterial ribosomal protein bL27 family.

The polypeptide is Large ribosomal subunit protein bL27 (Phenylobacterium zucineum (strain HLK1)).